The chain runs to 163 residues: Transcriptional repressor NrdR (163 aa).

Residues 1–22 (MRCPKCQSLKSSVIDSRQAEDG) form a disordered region. The segment at 3-34 (CPKCQSLKSSVIDSRQAEDGNTIRRRRSCDQC) is a zinc-finger region. The 91-residue stretch at 49–139 (LVVVKKDGTR…VYRSFKDVGE (91 aa)) folds into the ATP-cone domain.

It belongs to the NrdR family. Requires Zn(2+) as cofactor.

Its function is as follows. Negatively regulates transcription of bacterial ribonucleotide reductase nrd genes and operons by binding to NrdR-boxes. The chain is Transcriptional repressor NrdR from Streptococcus suis (strain 98HAH33).